Consider the following 496-residue polypeptide: Probable serine/threonine-protein kinase DDB_G0284251 (496 aa).

Positions 1–13 (MIEINNNHNNGNG) are enriched in low complexity. The interval 1–25 (MIEINNNHNNGNGKQFPSSQIMPDS) is disordered. The 253-residue stretch at 36–288 (YTLGEKIGRG…AQELLQHPIF (253 aa)) folds into the Protein kinase domain. Residues 42-50 (IGRGAFGQV) and Lys65 each bind ATP. Catalysis depends on Asp158, which acts as the Proton acceptor. The tract at residues 323–345 (DWGSSSSTSGSSTPLSSSSSSSN) is disordered. A coiled-coil region spans residues 353-386 (EDFNKLQTTIKQQAQTISNLSEEILILKKELKEK). Positions 454-496 (PQLTPSSSRENISLSNSSSSIPNPNQNQNQNNKSKSKKFGFFS) are disordered. A compositionally biased stretch (low complexity) spans 458 to 486 (PSSSRENISLSNSSSSIPNPNQNQNQNNK). Over residues 487–496 (SKSKKFGFFS) the composition is skewed to basic residues.

The protein belongs to the protein kinase superfamily. STE Ser/Thr protein kinase family. Mg(2+) serves as cofactor.

The catalysed reaction is L-seryl-[protein] + ATP = O-phospho-L-seryl-[protein] + ADP + H(+). It catalyses the reaction L-threonyl-[protein] + ATP = O-phospho-L-threonyl-[protein] + ADP + H(+). The protein is Probable serine/threonine-protein kinase DDB_G0284251 of Dictyostelium discoideum (Social amoeba).